We begin with the raw amino-acid sequence, 58 residues long: Sec-independent protein translocase protein TatA (58 aa).

Residues 1 to 21 (MLSNIGFPGLILILVAILILF) form a helical membrane-spanning segment.

The protein belongs to the TatA/E family. In terms of assembly, forms a complex with TatC.

It is found in the cell membrane. In terms of biological role, part of the twin-arginine translocation (Tat) system that transports large folded proteins containing a characteristic twin-arginine motif in their signal peptide across membranes. TatA could form the protein-conducting channel of the Tat system. This Bacillus cytotoxicus (strain DSM 22905 / CIP 110041 / 391-98 / NVH 391-98) protein is Sec-independent protein translocase protein TatA.